The sequence spans 391 residues: Elongation factor Tu (391 aa).

The tr-type G domain occupies 10–201; it reads KPHVNIGTIG…AVDEYIPTPA (192 aa). Residues 19-26 form a G1 region; the sequence is GHVDHGKT. GTP is bound at residue 19–26; sequence GHVDHGKT. Threonine 26 contacts Mg(2+). The tract at residues 55 to 59 is G2; it reads GITIS. A G3 region spans residues 76-79; the sequence is DCPG. Residues 76–80 and 131–134 contribute to the GTP site; these read DCPGH and NKVD. The interval 131-134 is G4; it reads NKVD. Residues 169–171 are G5; sequence SAL.

Belongs to the TRAFAC class translation factor GTPase superfamily. Classic translation factor GTPase family. EF-Tu/EF-1A subfamily. As to quaternary structure, monomer.

The protein resides in the cytoplasm. The catalysed reaction is GTP + H2O = GDP + phosphate + H(+). Its function is as follows. GTP hydrolase that promotes the GTP-dependent binding of aminoacyl-tRNA to the A-site of ribosomes during protein biosynthesis. This Jannaschia sp. (strain CCS1) protein is Elongation factor Tu.